The chain runs to 338 residues: Ketol-acid reductoisomerase (NADP(+)) (338 aa).

Residues 1–181 (MKVFYDKDCD…GGGKAGIIET (181 aa)) form the KARI N-terminal Rossmann domain. NADP(+) is bound by residues 24–27 (YGSQ), Arg47, and Ser52. Residue His107 is part of the active site. An NADP(+)-binding site is contributed by Gly133. One can recognise a KARI C-terminal knotted domain in the interval 182 to 327 (NFREETETDL…GKLRAMMPWI (146 aa)). Mg(2+) is bound by residues Asp190, Glu194, Glu226, and Glu230. Ser251 contacts substrate.

The protein belongs to the ketol-acid reductoisomerase family. Requires Mg(2+) as cofactor.

The enzyme catalyses (2R)-2,3-dihydroxy-3-methylbutanoate + NADP(+) = (2S)-2-acetolactate + NADPH + H(+). The catalysed reaction is (2R,3R)-2,3-dihydroxy-3-methylpentanoate + NADP(+) = (S)-2-ethyl-2-hydroxy-3-oxobutanoate + NADPH + H(+). Its pathway is amino-acid biosynthesis; L-isoleucine biosynthesis; L-isoleucine from 2-oxobutanoate: step 2/4. The protein operates within amino-acid biosynthesis; L-valine biosynthesis; L-valine from pyruvate: step 2/4. Functionally, involved in the biosynthesis of branched-chain amino acids (BCAA). Catalyzes an alkyl-migration followed by a ketol-acid reduction of (S)-2-acetolactate (S2AL) to yield (R)-2,3-dihydroxy-isovalerate. In the isomerase reaction, S2AL is rearranged via a Mg-dependent methyl migration to produce 3-hydroxy-3-methyl-2-ketobutyrate (HMKB). In the reductase reaction, this 2-ketoacid undergoes a metal-dependent reduction by NADPH to yield (R)-2,3-dihydroxy-isovalerate. This is Ketol-acid reductoisomerase (NADP(+)) from Polaromonas naphthalenivorans (strain CJ2).